The sequence spans 400 residues: Chaperone protein DnaJ (400 aa).

One can recognise a J domain in the interval 4 to 69 (DYYETLGVTR…DKRRRYDQFG (66 aa)). Residues 156 to 237 (GVEKTLKVKR…CYGEGIKLGE (82 aa)) form a CR-type zinc finger. Residues C169, C172, C185, C188, C211, C214, C225, and C228 each contribute to the Zn(2+) site. 4 CXXCXGXG motif repeats span residues 169–176 (CEVCNGTG), 185–192 (CQTCHGSG), 211–218 (CPTCGGEG), and 225–232 (CTACYGEG).

Belongs to the DnaJ family. Homodimer. Zn(2+) is required as a cofactor.

It localises to the cytoplasm. Participates actively in the response to hyperosmotic and heat shock by preventing the aggregation of stress-denatured proteins and by disaggregating proteins, also in an autonomous, DnaK-independent fashion. Unfolded proteins bind initially to DnaJ; upon interaction with the DnaJ-bound protein, DnaK hydrolyzes its bound ATP, resulting in the formation of a stable complex. GrpE releases ADP from DnaK; ATP binding to DnaK triggers the release of the substrate protein, thus completing the reaction cycle. Several rounds of ATP-dependent interactions between DnaJ, DnaK and GrpE are required for fully efficient folding. Also involved, together with DnaK and GrpE, in the DNA replication of plasmids through activation of initiation proteins. This is Chaperone protein DnaJ from Chlorobium chlorochromatii (strain CaD3).